The chain runs to 100 residues: Cell division topological specificity factor (100 aa).

This sequence belongs to the MinE family.

Prevents the cell division inhibition by proteins MinC and MinD at internal division sites while permitting inhibition at polar sites. This ensures cell division at the proper site by restricting the formation of a division septum at the midpoint of the long axis of the cell. The protein is Cell division topological specificity factor of Blochmanniella floridana.